A 533-amino-acid chain; its full sequence is Sterol 26-hydroxylase, mitochondrial (533 aa).

The N-terminal 32 residues, 1-32 (MAAWSRTRLRWTLLDPRVVGRGLCPQGARAKA), are a transit peptide targeting the mitochondrion. The segment at 34-60 (IPAALQAQESTEGPGTGQDRPRLRSPA) is disordered. 5 positions are modified to N6-acetyllysine: K142, K232, K285, K296, and K375. Residues 386–400 (PLLKAVIKETLRLYP) form a sterol-binding region. C479 lines the heme pocket. N6-acetyllysine occurs at positions 512 and 523.

It belongs to the cytochrome P450 family. As to quaternary structure, interacts with HSP70; this interaction is required for initial targeting to mitochondria. The cofactor is heme. Acetylation of Lys-125 and Lys-285 is observed in liver mitochondria from fasted mice but not from fed mice. In terms of tissue distribution, expressed in the gray and white matter of cerebellum (at protein level).

It is found in the mitochondrion inner membrane. It catalyses the reaction 5beta-cholestane-3alpha,7alpha,12alpha-triol + 6 reduced [adrenodoxin] + 3 O2 + 5 H(+) = (25R)-3alpha,7alpha,12alpha-trihydroxy-5beta-cholestan-26-oate + 6 oxidized [adrenodoxin] + 4 H2O. It carries out the reaction cholestanol + 2 reduced [adrenodoxin] + O2 + 2 H(+) = (25R)-26-hydroxycholestanol + 2 oxidized [adrenodoxin] + H2O. The enzyme catalyses (25R)-3beta-hydroxycholest-5-en-7-one-26-al + 2 reduced [adrenodoxin] + O2 + H(+) = (25R)-3beta-hydroxycholest-5-en-7-one-26-oate + 2 oxidized [adrenodoxin] + H2O. The catalysed reaction is (25R)-3beta,26-dihydroxycholest-5-en-7-one + 2 reduced [adrenodoxin] + O2 + 2 H(+) = (25R)-3beta-hydroxycholest-5-en-7-one-26-al + 2 oxidized [adrenodoxin] + 2 H2O. It catalyses the reaction 7-oxocholesterol + 2 reduced [adrenodoxin] + O2 + 2 H(+) = (25R)-3beta,26-dihydroxycholest-5-en-7-one + 2 oxidized [adrenodoxin] + H2O. It carries out the reaction calciol + 2 reduced [adrenodoxin] + O2 + 2 H(+) = calcidiol + 2 oxidized [adrenodoxin] + H2O. The enzyme catalyses (25R)-5beta-cholestane-3alpha,7alpha,12alpha,26-tetrol + 2 reduced [adrenodoxin] + O2 + 2 H(+) = (25R)-3alpha,7alpha,12alpha-trihydroxy-5beta-cholestan-26-al + 2 oxidized [adrenodoxin] + 2 H2O. The catalysed reaction is 2 reduced [adrenodoxin] + cholesterol + O2 + 2 H(+) = (25R)-cholest-5-ene-3beta,26-diol + 2 oxidized [adrenodoxin] + H2O. It catalyses the reaction (25R)-3beta,4beta-dihydroxycholest-5-en-26-al + 2 reduced [adrenodoxin] + O2 + H(+) = (25R)-3beta,4beta-dihydroxycholest-5-en-26-oate + 2 oxidized [adrenodoxin] + H2O. It carries out the reaction (25R)-4beta,26-dihydroxycholesterol + 2 reduced [adrenodoxin] + O2 + 2 H(+) = (25R)-3beta,4beta-dihydroxycholest-5-en-26-al + 2 oxidized [adrenodoxin] + 2 H2O. The enzyme catalyses 4beta-hydroxycholesterol + 2 reduced [adrenodoxin] + O2 + 2 H(+) = (25R)-4beta,26-dihydroxycholesterol + 2 oxidized [adrenodoxin] + H2O. The catalysed reaction is (25R)-3beta-hydroxy-5-cholesten-26-al + 2 reduced [adrenodoxin] + O2 + H(+) = (25R)-3beta-hydroxy-5-cholestenoate + 2 oxidized [adrenodoxin] + H2O. It catalyses the reaction (25R)-cholest-5-ene-3beta,26-diol + 2 reduced [adrenodoxin] + O2 + 2 H(+) = (25R)-3beta-hydroxy-5-cholesten-26-al + 2 oxidized [adrenodoxin] + 2 H2O. It carries out the reaction (25R)-3alpha,7alpha,12alpha-trihydroxy-5beta-cholestan-26-al + 2 reduced [adrenodoxin] + O2 + H(+) = (25R)-3alpha,7alpha,12alpha-trihydroxy-5beta-cholestan-26-oate + 2 oxidized [adrenodoxin] + H2O. The enzyme catalyses 5beta-cholestane-3alpha,7alpha,12alpha-triol + 2 reduced [adrenodoxin] + O2 + 2 H(+) = (25R)-5beta-cholestane-3alpha,7alpha,12alpha,26-tetrol + 2 oxidized [adrenodoxin] + H2O. The protein operates within hormone biosynthesis; cholecalciferol biosynthesis. It participates in steroid metabolism; cholesterol degradation. Its pathway is lipid metabolism; bile acid biosynthesis. Cytochrome P450 monooxygenase that catalyzes regio- and stereospecific hydroxylation of cholesterol and its derivatives. Hydroxylates (with R stereochemistry) the terminal methyl group of cholesterol side-chain in a three step reaction to yield at first a C26 alcohol, then a C26 aldehyde and finally a C26 acid. Regulates cholesterol homeostasis by catalyzing the conversion of excess cholesterol to bile acids via both the 'neutral' (classic) and the 'acid' (alternative) pathways. May also regulate cholesterol homeostasis via generation of active oxysterols, which act as ligands for NR1H2 and NR1H3 nuclear receptors, modulating the transcription of genes involved in lipid metabolism. Plays a role in cholestanol metabolism in the cerebellum. Similarly to cholesterol, hydroxylates cholestanol and may facilitate sterol diffusion through the blood-brain barrier to the systemic circulation for further degradation. Also hydroxylates retinal 7-ketocholesterol, a noxious oxysterol with pro-inflammatory and pro-apoptotic effects, and may play a role in its elimination from the retinal pigment epithelium. May play a redundant role in vitamin D biosynthesis. Catalyzes 25-hydroxylation of vitamin D3 that is required for its conversion to a functionally active form. The sequence is that of Sterol 26-hydroxylase, mitochondrial from Mus musculus (Mouse).